The chain runs to 719 residues: MFKIESIKSQSPQVAIDKERKATKFDINKMFEFLESGKDEAALTKSLMQQIERDTILKTNASYYDLTKDQHRELTAQKIARLASYIEKDAPFFENFQKRLNLIAIVDPQLGTRVGVHLGLFLSAIRGNGTEEQFKYWAFERGAAYLKDVYGCFGMTELAHGSNVAGLETTATFDQKTKEFEINTPHLGATKWWIGGAAHSANHCVVYARLIVSGKDYGVKTFVVPIRDRNHNLHSGVAIGDIGAKMGRDGIDNGWIQLTNVRIPMNYMRSKFTKVTQRQEIVEVPPLEQLAYGALLGGRVTMVTDSFRMAQRFITIALRYSVGRRQFGAKNSSEELKLIDYPLHQRRLLPYLALTYALSISSFDLSQTYDSVLSNLDAAGKSQDFSKLGQAIAGLKNLFCASASLKSTATWYVAQLIDECRQACGGHGYSSYSGFGKAYNDWVVQCTWEGDNNILASNAGRLLCNLLSSCKKKEKKIKGDLSYLNGISNIDKEAICWNKQSMTNLSNSNIDKELFCFNKQVCTVKLINAIQGTIIRLGVRVPNIGSKKSTWDDIAAQRVVLSKLNAVLYMLQHLVLKIKQLGDEEAHKQYLVQIAALFATSQIEMNFASYFLQFKAIDSLEPVADVVSELCLSVRDQVIGLTDSFQFSDYFINSALGSHSGDIYNTYFDTVNNLNNPQVRDGKAAYSEALEAMLRRDPLEVRECFEKSDKVLKKLAPKI.

The Microbody targeting signal signature appears at 716–719 (APKI).

It belongs to the acyl-CoA oxidase family. The cofactor is FAD.

Its subcellular location is the peroxisome. It catalyses the reaction a 2,3-saturated acyl-CoA + O2 = a (2E)-enoyl-CoA + H2O2. It participates in lipid metabolism; peroxisomal fatty acid beta-oxidation. The protein is Acyl-coenzyme A oxidase (POX1) of Komagataella pastoris (Yeast).